The chain runs to 1410 residues: DNA-directed RNA polymerase subunit beta' (1410 aa).

The Zn(2+) site is built by Cys-69, Cys-71, Cys-84, and Cys-87. Mg(2+)-binding residues include Asp-461, Asp-463, and Asp-465. Zn(2+)-binding residues include Cys-810, Cys-884, Cys-891, and Cys-894.

It belongs to the RNA polymerase beta' chain family. In terms of assembly, the RNAP catalytic core consists of 2 alpha, 1 beta, 1 beta' and 1 omega subunit. When a sigma factor is associated with the core the holoenzyme is formed, which can initiate transcription. It depends on Mg(2+) as a cofactor. The cofactor is Zn(2+).

The catalysed reaction is RNA(n) + a ribonucleoside 5'-triphosphate = RNA(n+1) + diphosphate. Its function is as follows. DNA-dependent RNA polymerase catalyzes the transcription of DNA into RNA using the four ribonucleoside triphosphates as substrates. In Ehrlichia chaffeensis (strain ATCC CRL-10679 / Arkansas), this protein is DNA-directed RNA polymerase subunit beta'.